The sequence spans 237 residues: Ribosomal RNA small subunit methyltransferase G (237 aa).

Residues G78, F83, 129–130, and R148 contribute to the S-adenosyl-L-methionine site; that span reads AE.

The protein belongs to the methyltransferase superfamily. RNA methyltransferase RsmG family.

It localises to the cytoplasm. Specifically methylates the N7 position of a guanine in 16S rRNA. This chain is Ribosomal RNA small subunit methyltransferase G, found in Streptococcus pyogenes serotype M12 (strain MGAS9429).